The sequence spans 138 residues: Histone H2B.8 (138 aa).

Basic and acidic residues predominate over residues 1–38 (MAPKAAEKKPAGKKPAEKAPAEKLPKAEKKITKEGGSE). The interval 1 to 45 (MAPKAAEKKPAGKKPAEKAPAEKLPKAEKKITKEGGSEKKKKKSK) is disordered. Ala2 bears the N,N,N-trimethylalanine; alternate mark. N,N-dimethylalanine; alternate is present on Ala2. Ala2 is modified (N-methylalanine; alternate). Lys4 bears the N6-methyllysine mark. N6-acetyllysine is present on residues Lys8 and Lys13. Lys14 bears the N6,N6-dimethyllysine mark. Lys18, Lys23, Lys29, and Lys30 each carry N6-acetyllysine. Residue Lys134 forms a Glycyl lysine isopeptide (Lys-Gly) (interchain with G-Cter in ubiquitin) linkage.

It belongs to the histone H2B family. In terms of assembly, the nucleosome is a histone octamer containing two molecules each of H2A, H2B, H3 and H4 assembled in one H3-H4 heterotetramer and two H2A-H2B heterodimers. The octamer wraps approximately 147 bp of DNA. Post-translationally, can be acetylated to form H2BK6ac, H2BK33ac and H2BK34ac. Monoubiquitinated by BRE1 to form H2BK143ub1 and deubiquitinated by UBP26. Required for heterochromatic histone H3 di- and trimethylation at H3K4me. May give a specific tag for epigenetic transcriptional activation.

The protein localises to the nucleus. The protein resides in the chromosome. In terms of biological role, core component of nucleosome. Nucleosomes wrap and compact DNA into chromatin, limiting DNA accessibility to the cellular machineries which require DNA as a template. Histones thereby play a central role in transcription regulation, DNA repair, DNA replication and chromosomal stability. DNA accessibility is regulated via a complex set of post-translational modifications of histones, also called histone code, and nucleosome remodeling. The chain is Histone H2B.8 from Arabidopsis thaliana (Mouse-ear cress).